The following is a 263-amino-acid chain: 5'-nucleotidase SurE (263 aa).

Residues Asp10, Asp11, Ser41, and Asn95 each contribute to the a divalent metal cation site.

Belongs to the SurE nucleotidase family. A divalent metal cation is required as a cofactor.

The protein resides in the cytoplasm. It carries out the reaction a ribonucleoside 5'-phosphate + H2O = a ribonucleoside + phosphate. Functionally, nucleotidase that shows phosphatase activity on nucleoside 5'-monophosphates. The sequence is that of 5'-nucleotidase SurE from Methanoculleus marisnigri (strain ATCC 35101 / DSM 1498 / JR1).